A 232-amino-acid chain; its full sequence is uncharacterized protein (232 aa).

The chain crosses the membrane as a helical span at residues 209–229; the sequence is ATISTPALGYAYFLFTLTLVF.

The protein localises to the host membrane. This is an uncharacterized protein from Saccharolobus islandicus (Sulfolobus islandicus).